Consider the following 385-residue polypeptide: DNA replication and repair protein RecF (385 aa).

Residue 30 to 37 (GPNGNGKT) participates in ATP binding.

This sequence belongs to the RecF family.

The protein resides in the cytoplasm. In terms of biological role, the RecF protein is involved in DNA metabolism; it is required for DNA replication and normal SOS inducibility. RecF binds preferentially to single-stranded, linear DNA. It also seems to bind ATP. The protein is DNA replication and repair protein RecF of Mycobacterium leprae (strain Br4923).